A 440-amino-acid polypeptide reads, in one-letter code: Nitrilase and fragile histidine triad fusion protein NitFhit (440 aa).

The CN hydrolase domain maps to 14 to 264 (RHFIAVCQMT…VDMCFAEIDL (251 aa)). Residues Glu54, Lys127, and Cys169 contribute to the active site. The HIT domain maps to 297-405 (GGLKFARFNI…LPRRAGDFGD (109 aa)). Residues 390–394 (HVHIH) carry the Histidine triad motif motif. The active-site Tele-AMP-histidine intermediate is His392.

This sequence in the N-terminal section; belongs to the UPF0012 family. As to quaternary structure, homotetramer. It depends on Mn(2+) as a cofactor.

The enzyme catalyses P(1),P(3)-bis(5'-adenosyl) triphosphate + H2O = AMP + ADP + 2 H(+). Functionally, cleaves A-5'-PPP-5'A to yield AMP and ADP. This Caenorhabditis elegans protein is Nitrilase and fragile histidine triad fusion protein NitFhit.